The sequence spans 265 residues: PBSX phage terminase small subunit (265 aa).

Positions 241-265 are disordered; it reads KQKAEKTDDSQEPIEIMIKRKERKS.

The protein to B.subtilis YqaS and B.subtilis phage SPP1 terminase small subunit. Dimer of a small and a large subunit.

Its function is as follows. Functions as a terminase. In Bacillus subtilis (strain 168), this protein is PBSX phage terminase small subunit (xtmA).